The sequence spans 322 residues: HPr kinase/phosphorylase (322 aa).

Catalysis depends on residues His-146 and Lys-167. Position 161-168 (161-168 (GDSGLGKS)) interacts with ATP. Ser-168 contributes to the Mg(2+) binding site. The active-site Proton acceptor; for phosphorylation activity. Proton donor; for dephosphorylation activity is the Asp-185. Positions 209-218 (LEVRGLGLLD) are important for the catalytic mechanism of both phosphorylation and dephosphorylation. A Mg(2+)-binding site is contributed by Glu-210. The active site involves Arg-250. The tract at residues 271 to 276 (QVAAGR) is important for the catalytic mechanism of dephosphorylation.

The protein belongs to the HPrK/P family. In terms of assembly, homohexamer. Requires Mg(2+) as cofactor.

The enzyme catalyses [HPr protein]-L-serine + ATP = [HPr protein]-O-phospho-L-serine + ADP + H(+). It carries out the reaction [HPr protein]-O-phospho-L-serine + phosphate + H(+) = [HPr protein]-L-serine + diphosphate. Functionally, catalyzes the ATP- as well as the pyrophosphate-dependent phosphorylation of a specific serine residue in HPr, a phosphocarrier protein of the phosphoenolpyruvate-dependent sugar phosphotransferase system (PTS). HprK/P also catalyzes the pyrophosphate-producing, inorganic phosphate-dependent dephosphorylation (phosphorolysis) of seryl-phosphorylated HPr (P-Ser-HPr). This chain is HPr kinase/phosphorylase, found in Burkholderia cenocepacia (strain HI2424).